The chain runs to 302 residues: Urease accessory protein UreD 1 (302 aa).

It belongs to the UreD family. UreD, UreF and UreG form a complex that acts as a GTP-hydrolysis-dependent molecular chaperone, activating the urease apoprotein by helping to assemble the nickel containing metallocenter of UreC. The UreE protein probably delivers the nickel.

The protein localises to the cytoplasm. Its function is as follows. Required for maturation of urease via the functional incorporation of the urease nickel metallocenter. This is Urease accessory protein UreD 1 from Psychrobacter cryohalolentis (strain ATCC BAA-1226 / DSM 17306 / VKM B-2378 / K5).